A 538-amino-acid polypeptide reads, in one-letter code: Methyl-accepting chemotaxis protein NahY (538 aa).

Topologically, residues 1–9 are cytoplasmic; it reads MQQFTIRTR. The chain crosses the membrane as a helical span at residues 10–30; the sequence is LLMLVGAMFIGFITIELMGFS. Topologically, residues 31-187 are periplasmic; it reads ALQRGVASLN…AVVLYDSSRT (157 aa). A helical membrane pass occupies residues 188–208; sequence MLALLLLGILICGGVFATRLI. One can recognise an HAMP domain in the interval 209-261; sequence RSIIHPLTTLKDAAARVALGDLSQSIQVSGRNEVTDVQQSVQAMQANLRNTLQ. The Cytoplasmic segment spans residues 209 to 538; the sequence is RSIIHPLTTL…LNNLVNRFSM (330 aa). In terms of domain architecture, Methyl-accepting transducer spans 266–502; that stretch reads SAAQLAAAAE…EVDRNLVAIS (237 aa).

The protein belongs to the methyl-accepting chemotaxis (MCP) protein family.

The protein resides in the cell inner membrane. In terms of biological role, chemotactic-signal transducers respond to changes in the concentration of attractants and repellents in the environment, transduce a signal from the outside to the inside of the cell, and facilitate sensory adaptation through the variation of the level of methylation. Chemoreceptor for naphthalene or a related compound. May facilitate biodegradation. The protein is Methyl-accepting chemotaxis protein NahY (nahY) of Pseudomonas putida (Arthrobacter siderocapsulatus).